Reading from the N-terminus, the 105-residue chain is MGPQQDRSAAKPYANGSTAAAAAAGRKENNKVVRYRECQRNHAASIGGHAVDGCREFMASGADGTAAALLCAACGCHQSFHRREVEAAAAECDCSSDTSSGTGRR.

The interval 1–29 (MGPQQDRSAAKPYANGSTAAAAAAGRKEN) is disordered. The ZF-HD dimerization-type; degenerate zinc-finger motif lies at 35 to 84 (YRECQRNHAASIGGHAVDGCREFMASGADGTAAALLCAACGCHQSFHRRE).

In terms of assembly, homo- and heterodimers.

The protein resides in the cytoplasm. Functionally, inhibits zinc finger homeodomain (ZHD) transcription factors, by interacting with them to prevent both their nuclear localization and their DNA-binding properties. This chain is Mini zinc finger protein 2 (MIF2), found in Oryza sativa subsp. indica (Rice).